A 545-amino-acid polypeptide reads, in one-letter code: Purple acid phosphatase 13 (545 aa).

A signal peptide spans 1-25 (MVVKYTMSMSFFVIFASTVTIIVHG). N-linked (GlcNAc...) asparagine glycans are attached at residues Asn-125 and Asn-145. Fe cation is bound at residue Asp-203. Asn-209 carries an N-linked (GlcNAc...) asparagine glycan. A Fe cation-binding site is contributed by Tyr-233. N-linked (GlcNAc...) asparagine glycosylation is found at Asn-240, Asn-254, Asn-306, Asn-321, Asn-351, and Asn-367. His-389 functions as the Proton donor in the catalytic mechanism. His-416 is a binding site for Zn(2+). 416 to 418 (HVD) serves as a coordination point for substrate. Residues Asn-428, Asn-466, Asn-475, and Asn-510 are each glycosylated (N-linked (GlcNAc...) asparagine).

The protein belongs to the metallophosphoesterase superfamily. Purple acid phosphatase family. Homodimer. Fe cation serves as cofactor. It depends on Zn(2+) as a cofactor. In terms of tissue distribution, expressed in stems, leaves, flowers and siliques.

The protein resides in the secreted. The catalysed reaction is a phosphate monoester + H2O = an alcohol + phosphate. This is Purple acid phosphatase 13 (PAP13) from Arabidopsis thaliana (Mouse-ear cress).